Here is a 433-residue protein sequence, read N- to C-terminus: Succinate--CoA ligase [GDP-forming] subunit beta, mitochondrial (433 aa).

The N-terminal 38 residues, 1–38, are a transit peptide targeting the mitochondrion; it reads MASPVAIAAQAGKLLRERALRPLLAVRSQAGHLTPRRW. Residues 47-275 form the ATP-grasp domain; it reads KKLMSEHGVR…NAEFRQKDIF (229 aa). Glutamine 58 is a GTP binding site. An N6-acetyllysine; alternate modification is found at lysine 67. Lysine 67 bears the N6-succinyllysine; alternate mark. The residue at position 74 (lysine 74) is an N6-acetyllysine. Lysine 79 is modified (N6-succinyllysine). GTP is bound at residue 91–93; it reads GRG. N6-acetyllysine occurs at positions 112, 133, and 140. Leucine 147 is a binding site for GTP. Phosphoserine is present on serine 162. At lysine 201 the chain carries N6-acetyllysine. Phosphoserine is present on serine 217. Residues lysine 219 and lysine 228 each carry the N6-acetyllysine modification. Residues asparagine 244 and aspartate 258 each contribute to the Mg(2+) site. N6-acetyllysine is present on lysine 272. Asparagine 309 contacts substrate. Lysine 339 carries the post-translational modification N6-succinyllysine. At lysine 348 the chain carries N6-acetyllysine. Substrate is bound at residue 366–368; the sequence is GIV. N6-acetyllysine is present on residues lysine 387, lysine 407, and lysine 424.

It belongs to the succinate/malate CoA ligase beta subunit family. GTP-specific subunit beta subfamily. As to quaternary structure, heterodimer of an alpha and a beta subunit. The beta subunit determines specificity for GTP. The cofactor is Mg(2+).

Its subcellular location is the mitochondrion. It catalyses the reaction GTP + succinate + CoA = succinyl-CoA + GDP + phosphate. Its pathway is carbohydrate metabolism; tricarboxylic acid cycle; succinate from succinyl-CoA (ligase route): step 1/1. Functionally, GTP-specific succinyl-CoA synthetase functions in the citric acid cycle (TCA), coupling the hydrolysis of succinyl-CoA to the synthesis of GTP and thus represents the only step of substrate-level phosphorylation in the TCA. The beta subunit provides nucleotide specificity of the enzyme and binds the substrate succinate, while the binding sites for coenzyme A and phosphate are found in the alpha subunit. The chain is Succinate--CoA ligase [GDP-forming] subunit beta, mitochondrial from Mus musculus (Mouse).